Here is a 404-residue protein sequence, read N- to C-terminus: Cysteine desulfurase IscS (404 aa).

Pyridoxal 5'-phosphate is bound by residues 75 to 76 (AT), asparagine 155, glutamine 183, and 203 to 205 (SAH). Position 206 is an N6-(pyridoxal phosphate)lysine (lysine 206). A pyridoxal 5'-phosphate-binding site is contributed by threonine 243. Cysteine 328 serves as the catalytic Cysteine persulfide intermediate. Cysteine 328 provides a ligand contact to [2Fe-2S] cluster.

This sequence belongs to the class-V pyridoxal-phosphate-dependent aminotransferase family. NifS/IscS subfamily. Homodimer. Forms a heterotetramer with IscU, probably interacts with other sulfur acceptors. Pyridoxal 5'-phosphate serves as cofactor.

Its subcellular location is the cytoplasm. The enzyme catalyses (sulfur carrier)-H + L-cysteine = (sulfur carrier)-SH + L-alanine. The protein operates within cofactor biosynthesis; iron-sulfur cluster biosynthesis. With respect to regulation, inhibited by equimolar N-iodoacetyl-N'-(5-sulfo-1-naphthyl)ethylenediamine. Functionally, master enzyme that delivers sulfur to a number of partners involved in Fe-S cluster assembly, tRNA modification or cofactor biosynthesis. Catalyzes the removal of elemental sulfur from cysteine to produce alanine via an enzyme-bound persulfide intermediate. Functions as a sulfur delivery protein for Fe-S cluster synthesis. Cluster assembly on IscU homodimers proceeds sequentially from 1 2Fe-2S per dimer, to 2 2Fe-2S per dimer and finally 1 4Fe-4S per dimer. The sequence is that of Cysteine desulfurase IscS from Azotobacter vinelandii.